Consider the following 146-residue polypeptide: 3-dehydroquinate dehydratase (146 aa).

Tyr22 serves as the catalytic Proton acceptor. Residues Asn73, His79, and Asp86 each coordinate substrate. The active-site Proton donor is the His99. Substrate contacts are provided by residues 100–101 (LS) and Arg110.

This sequence belongs to the type-II 3-dehydroquinase family. As to quaternary structure, homododecamer.

It catalyses the reaction 3-dehydroquinate = 3-dehydroshikimate + H2O. The protein operates within metabolic intermediate biosynthesis; chorismate biosynthesis; chorismate from D-erythrose 4-phosphate and phosphoenolpyruvate: step 3/7. Functionally, catalyzes a trans-dehydration via an enolate intermediate. The polypeptide is 3-dehydroquinate dehydratase (Synechococcus sp. (strain CC9605)).